The sequence spans 85 residues: Large ribosomal subunit protein bL27 (85 aa).

Residues 1–22 form a disordered region; sequence MAHKKAAGSTRNGRDSESKRLG.

Belongs to the bacterial ribosomal protein bL27 family.

This is Large ribosomal subunit protein bL27 from Pseudoalteromonas translucida (strain TAC 125).